The sequence spans 186 residues: Large ribosomal subunit protein uL5c (186 aa).

It belongs to the universal ribosomal protein uL5 family. In terms of assembly, part of the 50S ribosomal subunit; contacts the 5S rRNA.

The protein localises to the plastid. The protein resides in the chloroplast. Binds 5S rRNA, forms part of the central protuberance of the 50S subunit. The sequence is that of Large ribosomal subunit protein uL5c (rpl5) from Chaetosphaeridium globosum (Charophycean green alga).